Consider the following 404-residue polypeptide: Argininosuccinate synthase (404 aa).

A9 to S17 is an ATP binding site. Residue Y86 participates in L-citrulline binding. G116 lines the ATP pocket. Positions 118, 122, and 123 each coordinate L-aspartate. N122 is a binding site for L-citrulline. L-citrulline-binding residues include R126, S174, S183, E259, and Y271.

It belongs to the argininosuccinate synthase family. Type 1 subfamily. As to quaternary structure, homotetramer.

It is found in the cytoplasm. The enzyme catalyses L-citrulline + L-aspartate + ATP = 2-(N(omega)-L-arginino)succinate + AMP + diphosphate + H(+). Its pathway is amino-acid biosynthesis; L-arginine biosynthesis; L-arginine from L-ornithine and carbamoyl phosphate: step 2/3. The protein is Argininosuccinate synthase of Listeria innocua serovar 6a (strain ATCC BAA-680 / CLIP 11262).